Consider the following 431-residue polypeptide: MADAESQNGENHLPHKIYLDYNATTPPATEVVKAVEEALREAWGNPSSSYTAGCKAKELIDTARAHVAKMVGGKPEDIIFTSGGTEANNMVLFSTVENFNSTSKERQNNRVALALPHIITSNVEHDSVALPLLHLQKTHRAEITFVPVSTVTGRIEVEDIISAVRPNTCLVSIMLANNETGVIMPVGELSQCLASMSKERSAQGLPKILLHTDAAQALGKVEVDVQELGVNYLTIVGHKFYGPRIGALYVRGLGQHSSLLPMLYGGGQERNFRPGTENTPMIAGLGKAAELVFLHCAVYEAHMRRIRDYLEERLEAVFEDRIRLNSRFPGAERLPNTCNVSLLKPAMLGHEWLSHCQYLQASIGAACHSDRGDRPSPVLLNSGVPQEAATSAVRLSVGRETSQDDVDLIVRDLEQAAQLLGVNKKSLKKLP.

An N6-(pyridoxal phosphate)lysine modification is found at Lys239. The S-selanylcysteine intermediate role is filled by Cys367.

It belongs to the class-V pyridoxal-phosphate-dependent aminotransferase family. In terms of assembly, homodimer. Pyridoxal 5'-phosphate is required as a cofactor.

The protein localises to the cytoplasm. Its subcellular location is the cytosol. The catalysed reaction is L-selenocysteine + AH2 = hydrogenselenide + L-alanine + A + H(+). In terms of biological role, catalyzes the decomposition of L-selenocysteine to L-alanine and elemental selenium. The protein is Selenocysteine lyase (scly) of Xenopus tropicalis (Western clawed frog).